The sequence spans 309 residues: Taste receptor type 2 member 43 (309 aa).

A topological domain (extracellular) is located at residue methionine 1. A helical membrane pass occupies residues 2–22 (ITFLPIIFSSLVVVTFVIGNF). At 23–46 (ANGFIALVNSIEWFKRQKISFADQ) the chain is on the cytoplasmic side. The chain crosses the membrane as a helical span at residues 47-67 (ILTALAVSRVGLLWVLLLNWY). At 68 to 86 (LTVLNPAFNSVEVRTTAYN) the chain is on the extracellular side. A helical transmembrane segment spans residues 87 to 107 (IWAVINHFSNWLATSLSIFYL). At 108–126 (LKIANFSNFIFLHLKRRVK) the chain is on the cytoplasmic side. Residues 127–147 (SVILVMLLGPLLFLACHLFMI) form a helical membrane-spanning segment. At 148 to 178 (NMNEIVRTKEFDGNMTWKIKLKSAMYFSNMT) the chain is on the extracellular side. Asparagine 161 and asparagine 176 each carry an N-linked (GlcNAc...) asparagine glycan. The helical transmembrane segment at 179–199 (VTMVANLVPFTLTLLSFLLLI) threads the bilayer. Residues 200–229 (CSLCKHLKKMQLHGKGSQDPSTKVHIKALQ) are Cytoplasmic-facing. Residues 230–250 (TVISFLLLCAIYFLSIMISVW) form a helical membrane-spanning segment. At 251–259 (SFGSLENKP) the chain is on the extracellular side. A helical transmembrane segment spans residues 260 to 280 (VFMFCKAIRFSYPSIHPFILI). At 281-309 (WGNKKLKQTFLSVFWQMRYWVKGEKTSSP) the chain is on the cytoplasmic side.

It belongs to the G-protein coupled receptor T2R family.

Its subcellular location is the membrane. It localises to the cell projection. The protein localises to the cilium membrane. Gustducin-coupled receptor immplicated in the perception of bitter compounds in the oral cavity and the gastrointestinal tract. Signals through PLCB2 and the calcium-regulated cation channel TRPM5. Activated by the sulfonyl amide sweeteners saccharin and acesulfame K. In airway epithelial cells, binding of bitter compounds increases the intracellular calcium ion concentration and stimulates ciliary beat frequency. May act as chemosensory receptors in airway epithelial cells to detect and eliminate potential noxious agents from the airways. The protein is Taste receptor type 2 member 43 (TAS2R43) of Pan paniscus (Pygmy chimpanzee).